A 423-amino-acid polypeptide reads, in one-letter code: Serine--tRNA ligase (423 aa).

228-230 (TSE) contributes to the L-serine binding site. 259–261 (RLE) serves as a coordination point for ATP. E282 is an L-serine binding site. Residue 346–349 (EISS) coordinates ATP. Residue S384 coordinates L-serine.

This sequence belongs to the class-II aminoacyl-tRNA synthetase family. Type-1 seryl-tRNA synthetase subfamily. Homodimer. The tRNA molecule binds across the dimer.

It localises to the cytoplasm. It carries out the reaction tRNA(Ser) + L-serine + ATP = L-seryl-tRNA(Ser) + AMP + diphosphate + H(+). The catalysed reaction is tRNA(Sec) + L-serine + ATP = L-seryl-tRNA(Sec) + AMP + diphosphate + H(+). Its pathway is aminoacyl-tRNA biosynthesis; selenocysteinyl-tRNA(Sec) biosynthesis; L-seryl-tRNA(Sec) from L-serine and tRNA(Sec): step 1/1. Its function is as follows. Catalyzes the attachment of serine to tRNA(Ser). Is also able to aminoacylate tRNA(Sec) with serine, to form the misacylated tRNA L-seryl-tRNA(Sec), which will be further converted into selenocysteinyl-tRNA(Sec). In Ehrlichia canis (strain Jake), this protein is Serine--tRNA ligase.